A 234-amino-acid polypeptide reads, in one-letter code: Zinc finger FYVE domain-containing protein 21 (234 aa).

The segment at aspartate 44–leucine 104 adopts an FYVE-type zinc-finger fold. Residues cysteine 50, cysteine 53, cysteine 66, cysteine 69, cysteine 74, cysteine 77, cysteine 96, and cysteine 99 each contribute to the Zn(2+) site. Residues alanine 107–glutamine 234 form a PH-like region.

In terms of assembly, interacts with PTK2/FAK1.

It localises to the cell junction. The protein resides in the focal adhesion. The protein localises to the cytoplasmic vesicle. It is found in the endosome. Its function is as follows. Plays a role in cell adhesion, and thereby in cell motility which requires repeated formation and disassembly of focal adhesions. Regulates microtubule-induced PTK2/FAK1 dephosphorylation, an event important for focal adhesion disassembly, as well as integrin beta-1/ITGB1 cell surface expression. This is Zinc finger FYVE domain-containing protein 21 (ZFYVE21) from Homo sapiens (Human).